Here is an 863-residue protein sequence, read N- to C-terminus: Chloride channel protein A (863 aa).

At 1–124 (MFRNNNNDNN…TSKLNHMLKT (124 aa)) the chain is on the cytoplasmic side. Residues 48 to 78 (ENGLINNNNNSHNNNNGGNNNNHGPSKVTHR) form a disordered region. The span at 49-71 (NGLINNNNNSHNNNNGGNNNNHG) shows a compositional bias: low complexity. 7 consecutive transmembrane segments (helical) span residues 125–145 (FGKW…AYLV), 171–191 (IAFL…SLVI), 228–248 (LVSL…GPMI), 289–309 (GAAA…LFGF), 324–344 (TFFA…GFDM), 367–387 (LIPF…FVNL), and 408–428 (VLEV…CAAF). The disordered stretch occupies residues 434-460 (KTQANGSQTNSLDTSSSSILSSSGDNS). Over residues 439-460 (GSQTNSLDTSSSSILSSSGDNS) the composition is skewed to low complexity. Transmembrane regions (helical) follow at residues 518–538 (IFTI…TTIT), 539–559 (SGLM…ATFG), and 561–581 (LVGQ…ALVG). CBS domains lie at 661-742 (MKTE…CHEQ) and 816-863 (MNLS…KDLL).

The protein belongs to the chloride channel (TC 2.A.49) family.

The protein localises to the membrane. Functionally, voltage-gated chloride channel. Chloride channels may have several functions including the regulation of cell volume, membrane potential stabilization and signal transduction. The polypeptide is Chloride channel protein A (clcA) (Dictyostelium discoideum (Social amoeba)).